A 482-amino-acid chain; its full sequence is tRNA sulfurtransferase (482 aa).

Residues 61 to 165 (LAIRDALTRI…DDRLLLIKGR (105 aa)) enclose the THUMP domain. Residues 183-184 (LI), Lys-265, Gly-287, and Gln-296 contribute to the ATP site. A disulfide bridge links Cys-344 with Cys-456. In terms of domain architecture, Rhodanese spans 404–482 (FGPNDVILDI…GFNNVKVYRP (79 aa)). Cys-456 acts as the Cysteine persulfide intermediate in catalysis.

It belongs to the ThiI family.

It is found in the cytoplasm. The enzyme catalyses [ThiI sulfur-carrier protein]-S-sulfanyl-L-cysteine + a uridine in tRNA + 2 reduced [2Fe-2S]-[ferredoxin] + ATP + H(+) = [ThiI sulfur-carrier protein]-L-cysteine + a 4-thiouridine in tRNA + 2 oxidized [2Fe-2S]-[ferredoxin] + AMP + diphosphate. It catalyses the reaction [ThiS sulfur-carrier protein]-C-terminal Gly-Gly-AMP + S-sulfanyl-L-cysteinyl-[cysteine desulfurase] + AH2 = [ThiS sulfur-carrier protein]-C-terminal-Gly-aminoethanethioate + L-cysteinyl-[cysteine desulfurase] + A + AMP + 2 H(+). Its pathway is cofactor biosynthesis; thiamine diphosphate biosynthesis. Functionally, catalyzes the ATP-dependent transfer of a sulfur to tRNA to produce 4-thiouridine in position 8 of tRNAs, which functions as a near-UV photosensor. Also catalyzes the transfer of sulfur to the sulfur carrier protein ThiS, forming ThiS-thiocarboxylate. This is a step in the synthesis of thiazole, in the thiamine biosynthesis pathway. The sulfur is donated as persulfide by IscS. The chain is tRNA sulfurtransferase from Escherichia coli O8 (strain IAI1).